Consider the following 414-residue polypeptide: MATLTTTQTSPSLLGGVVIIGGTIIGAGMFSLPVVMSGAWFFWSMAALIFTWFCMLHSGLMILEANLNYRIGSSFDTITKDLLGKGWNVVNGISIAFVLYILTYAYISASGSILHHTFAEMSLNVPARAAGFGFALLVAFVVWLSTKAVSRMTAIVLGAKVITFFLTFGSLLGHVQPATLFNVAESNASYAPYLLMTLPFCLASFGYHGNVPSLMKYYGKDPKTIVKCLVYGTLMALALYTIWLLATMGNIPRPEFIGIAEKGGNIDVLVQALSGVLNSRSLDLLLVVFSNFAVASSFLGVTLGLFDYLADLFGFDDSAVGRLKTALLTFAPPVVGGLLFPNGFLYAIGYAGLAATIWAAIVPALLARASRKRFGSPKFRVWGGKPMIALILVFGVGNALVHILSSFNLLPVYQ.

Over 1–15 (MATLTTTQTSPSLLG) the chain is Cytoplasmic. The chain crosses the membrane as a helical span at residues 16–36 (GVVIIGGTIIGAGMFSLPVVM). At 37-41 (SGAWF) the chain is on the periplasmic side. Residues 42–62 (FWSMAALIFTWFCMLHSGLMI) traverse the membrane as a helical segment. The Cytoplasmic portion of the chain corresponds to 63-88 (LEANLNYRIGSSFDTITKDLLGKGWN). Residues 89–109 (VVNGISIAFVLYILTYAYISA) form a helical membrane-spanning segment. Residues 110–128 (SGSILHHTFAEMSLNVPAR) lie on the Periplasmic side of the membrane. Residues 129 to 149 (AAGFGFALLVAFVVWLSTKAV) traverse the membrane as a helical segment. Topologically, residues 150 to 151 (SR) are cytoplasmic. The helical transmembrane segment at 152 to 172 (MTAIVLGAKVITFFLTFGSLL) threads the bilayer. Topologically, residues 173 to 193 (GHVQPATLFNVAESNASYAPY) are periplasmic. The chain crosses the membrane as a helical span at residues 194–214 (LLMTLPFCLASFGYHGNVPSL). Residues 215-228 (MKYYGKDPKTIVKC) are Cytoplasmic-facing. Residues 229–249 (LVYGTLMALALYTIWLLATMG) form a helical membrane-spanning segment. Topologically, residues 250 to 285 (NIPRPEFIGIAEKGGNIDVLVQALSGVLNSRSLDLL) are periplasmic. The helical transmembrane segment at 286 to 306 (LVVFSNFAVASSFLGVTLGLF) threads the bilayer. Residues 307 to 325 (DYLADLFGFDDSAVGRLKT) lie on the Cytoplasmic side of the membrane. Transmembrane regions (helical) follow at residues 326–346 (ALLT…GFLY) and 347–367 (AIGY…ALLA). The Cytoplasmic segment spans residues 368–386 (RASRKRFGSPKFRVWGGKP). Residues 387 to 407 (MIALILVFGVGNALVHILSSF) traverse the membrane as a helical segment. Over 408 to 414 (NLLPVYQ) the chain is Periplasmic.

The protein belongs to the amino acid/polyamine transporter 2 family. Mtr/TnaB/TyrP permease subfamily.

Its subcellular location is the cell inner membrane. The enzyme catalyses L-tryptophan(in) + H(+)(in) = L-tryptophan(out) + H(+)(out). In terms of biological role, involved in the transport of tryptophan into the cell. This chain is Tryptophan-specific transport protein (mtr), found in Shigella flexneri.